A 611-amino-acid polypeptide reads, in one-letter code: Elongation factor 4 (611 aa).

The 182-residue stretch at 12-193 folds into the tr-type G domain; the sequence is AVIRNFCIIA…TIVAKVPAPE (182 aa). GTP is bound by residues 24–29 and 140–143; these read DHGKST and NKID.

Belongs to the TRAFAC class translation factor GTPase superfamily. Classic translation factor GTPase family. LepA subfamily.

Its subcellular location is the cell membrane. The enzyme catalyses GTP + H2O = GDP + phosphate + H(+). In terms of biological role, required for accurate and efficient protein synthesis under certain stress conditions. May act as a fidelity factor of the translation reaction, by catalyzing a one-codon backward translocation of tRNAs on improperly translocated ribosomes. Back-translocation proceeds from a post-translocation (POST) complex to a pre-translocation (PRE) complex, thus giving elongation factor G a second chance to translocate the tRNAs correctly. Binds to ribosomes in a GTP-dependent manner. This chain is Elongation factor 4, found in Cutibacterium acnes (strain DSM 16379 / KPA171202) (Propionibacterium acnes).